The sequence spans 875 residues: Alanine--tRNA ligase (875 aa).

Zn(2+) is bound by residues histidine 564, histidine 568, cysteine 666, and histidine 670.

The protein belongs to the class-II aminoacyl-tRNA synthetase family. As to quaternary structure, homotetramer. The cofactor is Zn(2+).

Its subcellular location is the cytoplasm. It carries out the reaction tRNA(Ala) + L-alanine + ATP = L-alanyl-tRNA(Ala) + AMP + diphosphate. In terms of biological role, catalyzes the attachment of alanine to tRNA(Ala) in a two-step reaction: alanine is first activated by ATP to form Ala-AMP and then transferred to the acceptor end of tRNA(Ala). Also edits incorrectly charged Ser-tRNA(Ala) and Gly-tRNA(Ala) via its editing domain. The protein is Alanine--tRNA ligase of Klebsiella pneumoniae subsp. pneumoniae (strain ATCC 700721 / MGH 78578).